The chain runs to 235 residues: Segregation and condensation protein A (235 aa).

It belongs to the ScpA family. Component of a cohesin-like complex composed of ScpA, ScpB and the Smc homodimer, in which ScpA and ScpB bind to the head domain of Smc. The presence of the three proteins is required for the association of the complex with DNA.

It localises to the cytoplasm. In terms of biological role, participates in chromosomal partition during cell division. May act via the formation of a condensin-like complex containing Smc and ScpB that pull DNA away from mid-cell into both cell halves. The protein is Segregation and condensation protein A of Streptococcus agalactiae serotype III (strain NEM316).